Reading from the N-terminus, the 218-residue chain is MASFEQMRANVGKLLRGIDRYNPENLATLERYVETQAKENAYDLEANLAVLKLYQFNPAFFQTTVTAQVLLKALTNLPHTDFTLCKCMIDQAHQEDRPIRQILYLGDLLETCHFQSFWQALDENLDLIDGVTGFEDSVRKFICHVVGITYQHIDRWLLAEMLGDLSEPQLRVWMSKYGWIESENGKIFVCNQEENIKPKNIVEKIDFDSVSGIMASSQ.

One can recognise a PCI domain in the interval 42–204 (YDLEANLAVL…NIKPKNIVEK (163 aa)).

The protein belongs to the eIF-3 subunit K family. In terms of assembly, component of the eukaryotic translation initiation factor 3 (eIF-3) complex, which is composed of 13 subunits: eif3a, eif3b, eif3c, eif3d, eif3e, eif3f, eif3g, eif3h, eif3i, eif3j, eif3k, eif3l and eif3m.

It is found in the nucleus. Its subcellular location is the cytoplasm. Its function is as follows. Component of the eukaryotic translation initiation factor 3 (eIF-3) complex, which is involved in protein synthesis of a specialized repertoire of mRNAs and, together with other initiation factors, stimulates binding of mRNA and methionyl-tRNAi to the 40S ribosome. The eIF-3 complex specifically targets and initiates translation of a subset of mRNAs involved in cell proliferation. This is Eukaryotic translation initiation factor 3 subunit K (eif3k) from Xenopus laevis (African clawed frog).